The following is a 179-amino-acid chain: MNRLKERYNTEVTENLVKKFNYSSVMEVPKIEKIVVNMGVGDAVQNSKVLDNAVEELELITGQKPLVTKAKKSVATFRLREGMPIGAKVTLRGERMYEFLDKLIAVSLPRVRDFQGVSKTAFDGRGNYTLGIKEQLIFPEIDYDKVSKVRGMDIVIVTTANTDEEARELLTNFGMPFRK.

This sequence belongs to the universal ribosomal protein uL5 family. As to quaternary structure, part of the 50S ribosomal subunit; part of the 5S rRNA/L5/L18/L25 subcomplex. Contacts the 5S rRNA and the P site tRNA. Forms a bridge to the 30S subunit in the 70S ribosome.

In terms of biological role, this is one of the proteins that bind and probably mediate the attachment of the 5S RNA into the large ribosomal subunit, where it forms part of the central protuberance. In the 70S ribosome it contacts protein S13 of the 30S subunit (bridge B1b), connecting the 2 subunits; this bridge is implicated in subunit movement. Contacts the P site tRNA; the 5S rRNA and some of its associated proteins might help stabilize positioning of ribosome-bound tRNAs. The polypeptide is Large ribosomal subunit protein uL5 (Staphylococcus haemolyticus (strain JCSC1435)).